Here is a 180-residue protein sequence, read N- to C-terminus: MIIYLHGFDSNSPGNHEKVLQLQFIDPDVRLVSYSTRHPKHDMQHLLKEVDKMLQLNVDDRPLICGVGLGGYWAERIGFLCDIRQVVFNPNLFPYENMEGKIDRPEEYADIATKCVTNFREKNRDRCLVILSRHDEALDSQRSAEALHPYYEIVWDEEQTHKFKNISPHLQRIKAFKTLG.

This sequence belongs to the UPF0227 family.

This chain is UPF0227 protein YcfP, found in Salmonella arizonae (strain ATCC BAA-731 / CDC346-86 / RSK2980).